A 415-amino-acid chain; its full sequence is Dynein assembly factor with WD repeat domains 1 (415 aa).

8 WD repeats span residues 90–129 (AHILPLTNVALNKAGSCFITGSYDRTCKVWDTASGEELHT), 132–174 (GHKN…HTFR), 175–214 (GHTAEIVCLSFNPQSTVVATGSMDTTAKLWDIQNGEEVVT), 217–256 (GHLAEIISLSFDTSGDRIITGSFDHTVVVWDASTGRKVHT), 259–298 (GHCAEISSALFNWDCSLILTGSMDKTCMLWDATSGKYVAT), 301–340 (GHDDEILDSCFDYTGKLIATASADGTARVYNATTRKCVTK), 343–384 (GHEG…QVLE), and 386–415 (HTDEIFSCAFNYKGNIVITGSKDNSCRIWR).

The protein belongs to the WD repeat WDR69 family. In terms of assembly, interacts with IFT46. In early mouse embryos, expression is limited to distal, motile ciliated cells of the node.

The protein resides in the cytoplasm. It is found in the cytoskeleton. Its subcellular location is the flagellum basal body. It localises to the flagellum axoneme. Functionally, required for axonemal dynein assembly and ciliary motility in ciliated organs, including Kupffer's vesicle, during embryogenesis. Facilitates the onset of robust cilia motility during development. This is Dynein assembly factor with WD repeat domains 1 from Mus musculus (Mouse).